Here is a 722-residue protein sequence, read N- to C-terminus: Endoglucanase F (722 aa).

An N-terminal signal peptide occupies residues 1–29 (MSKNFKRVGAVAVAAAMSLSIMATTSINA). Positions 142–165 (PEFQDPSKYPSPLDTSQPVGRDPI) are disordered. Residues 154–165 (LDTSQPVGRDPI) show a composition bias toward polar residues. A Dockerin domain is found at 661 to 722 (PEKLLGDVNG…LLKKALLSIQ (62 aa)).

This sequence belongs to the glycosyl hydrolase 48 (cellulase L) family.

It catalyses the reaction Endohydrolysis of (1-&gt;4)-beta-D-glucosidic linkages in cellulose, lichenin and cereal beta-D-glucans.. Functionally, probable endoglucanase involved in the degradation of cellulose or related beta-glucans. The chain is Endoglucanase F (celCCF) from Ruminiclostridium cellulolyticum (strain ATCC 35319 / DSM 5812 / JCM 6584 / H10) (Clostridium cellulolyticum).